Consider the following 472-residue polypeptide: Adenosylhomocysteinase (472 aa).

The substrate site is built by T64, D138, and E198. 199 to 201 (TTT) contacts NAD(+). Substrate-binding residues include K228 and D232. NAD(+) is bound by residues N233, 262–267 (GFGDVG), E285, N320, 341–343 (IGH), and N386.

Belongs to the adenosylhomocysteinase family. Requires NAD(+) as cofactor.

It is found in the cytoplasm. The enzyme catalyses S-adenosyl-L-homocysteine + H2O = L-homocysteine + adenosine. It functions in the pathway amino-acid biosynthesis; L-homocysteine biosynthesis; L-homocysteine from S-adenosyl-L-homocysteine: step 1/1. Its function is as follows. May play a key role in the regulation of the intracellular concentration of adenosylhomocysteine. This chain is Adenosylhomocysteinase, found in Prochlorococcus marinus (strain MIT 9312).